A 556-amino-acid polypeptide reads, in one-letter code: Oxygen-dependent choline dehydrogenase (556 aa).

Residue 6-35 (DYIIIGAGSAGNVLAARLTEDPGVSVLLLE) coordinates FAD. Catalysis depends on His475, which acts as the Proton acceptor.

Belongs to the GMC oxidoreductase family. Requires FAD as cofactor.

The catalysed reaction is choline + A = betaine aldehyde + AH2. It carries out the reaction betaine aldehyde + NAD(+) + H2O = glycine betaine + NADH + 2 H(+). Its pathway is amine and polyamine biosynthesis; betaine biosynthesis via choline pathway; betaine aldehyde from choline (cytochrome c reductase route): step 1/1. Involved in the biosynthesis of the osmoprotectant glycine betaine. Catalyzes the oxidation of choline to betaine aldehyde and betaine aldehyde to glycine betaine at the same rate. This is Oxygen-dependent choline dehydrogenase from Xanthomonas campestris pv. campestris (strain 8004).